Reading from the N-terminus, the 297-residue chain is Acetyl-coenzyme A carboxylase carboxyl transferase subunit beta (297 aa).

The region spanning 25–294 is the CoA carboxyltransferase N-terminal domain; it reads LWVKCPETGQ…VPPKGRLPAP (270 aa).

It belongs to the AccD/PCCB family. As to quaternary structure, acetyl-CoA carboxylase is a heterohexamer composed of biotin carboxyl carrier protein (AccB), biotin carboxylase (AccC) and two subunits each of ACCase subunit alpha (AccA) and ACCase subunit beta (AccD).

It localises to the cytoplasm. The enzyme catalyses N(6)-carboxybiotinyl-L-lysyl-[protein] + acetyl-CoA = N(6)-biotinyl-L-lysyl-[protein] + malonyl-CoA. The protein operates within lipid metabolism; malonyl-CoA biosynthesis; malonyl-CoA from acetyl-CoA: step 1/1. In terms of biological role, component of the acetyl coenzyme A carboxylase (ACC) complex. Biotin carboxylase (BC) catalyzes the carboxylation of biotin on its carrier protein (BCCP) and then the CO(2) group is transferred by the transcarboxylase to acetyl-CoA to form malonyl-CoA. This Azorhizobium caulinodans (strain ATCC 43989 / DSM 5975 / JCM 20966 / LMG 6465 / NBRC 14845 / NCIMB 13405 / ORS 571) protein is Acetyl-coenzyme A carboxylase carboxyl transferase subunit beta.